We begin with the raw amino-acid sequence, 506 residues long: MEEFKRYLELDRXQQHDFIYPLIFQEYIYALAHDRGLNKSIFFENADYDNKSSLLIVKRLITHLITQMYQQNHFFFYTNDFNPNKFLGYNTNLYSQMIFEGFVVVVEIPFYLRLLSFLEGKDREXLIXLXSLHSIFPFLEDKFSHLNYILDILIPHPVHLEILXQTLRYWVKDPSSLHLLXFFLHEYSNWNSLITPKKYSSSFSKRNQKFFLFLYNFHVCEYESIFVFLRNQSSHLCSISFETFLERILFYKKIELEIFVKDFKAILWVFKDPLLHYVRYRGKSILASKGSSLLMDKWKYYVVNFWECYFYIWAQPRRIHINQLSNNSLDFLGYLSSIRLKPSMVRSQMIENSFLIENASKKFDTLVPITPMIESLSKAKFCNVLGQPMSKPVWGGLSDSDIIERFGRIYRNLSHYYSGSLKKITLYRIKYILRLSCARTLARKHKSTVRSFLKRLGVGLLEEFFTEEEQVFYLTFPKASSTSRKLYQRRIWYLDIFCINDTANHE.

Belongs to the intron maturase 2 family. MatK subfamily.

The protein resides in the plastid. It localises to the chloroplast. In terms of biological role, usually encoded in the trnK tRNA gene intron. Probably assists in splicing its own and other chloroplast group II introns. In Gaultheria procumbens (Wintergreen), this protein is Maturase K.